A 231-amino-acid polypeptide reads, in one-letter code: Ion-translocating oxidoreductase complex subunit E (231 aa).

A run of 6 helical transmembrane segments spans residues Ala-18–Ala-38, Leu-39–Leu-59, Thr-63–Val-83, Leu-86–Val-106, Ala-125–Leu-145, and Pro-182–Gly-202.

The protein belongs to the NqrDE/RnfAE family. In terms of assembly, the complex is composed of six subunits: RsxA, RsxB, RsxC, RsxD, RsxE and RsxG.

It is found in the cell inner membrane. Part of a membrane-bound complex that couples electron transfer with translocation of ions across the membrane. Required to maintain the reduced state of SoxR. This Escherichia coli (strain ATCC 8739 / DSM 1576 / NBRC 3972 / NCIMB 8545 / WDCM 00012 / Crooks) protein is Ion-translocating oxidoreductase complex subunit E.